We begin with the raw amino-acid sequence, 145 residues long: Peptide methionine sulfoxide reductase MsrB (145 aa).

Positions 4–127 (SDELKQRIGD…NSAALKFIPY (124 aa)) constitute a MsrB domain. C116 acts as the Nucleophile in catalysis.

The protein belongs to the MsrB Met sulfoxide reductase family.

It catalyses the reaction L-methionyl-[protein] + [thioredoxin]-disulfide + H2O = L-methionyl-(R)-S-oxide-[protein] + [thioredoxin]-dithiol. The polypeptide is Peptide methionine sulfoxide reductase MsrB (Streptococcus pyogenes serotype M18 (strain MGAS8232)).